A 114-amino-acid chain; its full sequence is Class I hydrophobin SC16 (114 aa).

A signal peptide spans 1–17; that stretch reads MRFFATLVLALPALAMA. 4 cysteine pairs are disulfide-bonded: Cys-33–Cys-93, Cys-40–Cys-87, Cys-41–Cys-74, and Cys-94–Cys-107. An N-linked (GlcNAc...) asparagine glycan is attached at Asn-42.

This sequence belongs to the fungal hydrophobin family. Self-assembles to form functional amyloid fibrils called rodlets. Self-assembly into fibrillar rodlets occurs spontaneously at hydrophobic:hydrophilic interfaces and the rodlets further associate laterally to form amphipathic monolayers.

The protein localises to the secreted. It localises to the cell wall. Aerial growth, conidiation, and dispersal of filamentous fungi in the environment rely upon a capability of their secreting small amphipathic proteins called hydrophobins (HPBs) with low sequence identity. Class I can self-assemble into an outermost layer of rodlet bundles on aerial cell surfaces, conferring cellular hydrophobicity that supports fungal growth, development and dispersal; whereas Class II form highly ordered films at water-air interfaces through intermolecular interactions but contribute nothing to the rodlet structure. This is Class I hydrophobin SC16 from Schizophyllum commune (strain H4-8 / FGSC 9210) (Split gill fungus).